Here is a 338-residue protein sequence, read N- to C-terminus: Erlin-2 (338 aa).

The Cytoplasmic portion of the chain corresponds to 1–3 (MAQ). Residues 4 to 24 (LGAVVAVAASFFCASLFSAVH) traverse the membrane as a helical segment. Over 25-338 (KIEEGHIGVY…DEPMEADSEN (314 aa)) the chain is Lumenal. Residue Asn-106 is glycosylated (N-linked (GlcNAc...) asparagine). The segment at 177 to 309 (EAIRRNYELM…DIPNMFMDSA (133 aa)) is interaction with ERLIN1. Lys-267 carries the N6-acetyllysine modification.

This sequence belongs to the band 7/mec-2 family. As to quaternary structure, forms a heteromeric complex with ERLIN1. In complex with ERLIN1, interacts with RNF170. Interacts with activated ITPR1, independently of the degree of ITPR1 polyubiquitination. Interacts with SCAP, INSIG1, SREBF1 and SREBF2 under cholesterol sufficiency conditions; indicative for an association with the SCAP-SREBP-INSIG complex. Probably part of an AMFR/gp78 and INSIG1-containing ubiquitin ligase complex involved in ERAD of HMGCR. Interacts with TMUB1; TMUB1 bridges the association with AMFR. Interacts with SYVN1 and RNF139. Interacts with TMEM259. Interacts with TMEM41B. Post-translationally, deubiquitinated by USP25; leading to stabilization.

Its subcellular location is the endoplasmic reticulum membrane. Functionally, component of the ERLIN1/ERLIN2 complex which mediates the endoplasmic reticulum-associated degradation (ERAD) of inositol 1,4,5-trisphosphate receptors (IP3Rs) such as ITPR1. Promotes sterol-accelerated ERAD of HMGCR probably implicating an AMFR/gp78-containing ubiquitin ligase complex. Involved in regulation of cellular cholesterol homeostasis by regulation the SREBP signaling pathway. May promote ER retention of the SCAP-SREBF complex. The sequence is that of Erlin-2 (ERLIN2) from Bos taurus (Bovine).